Consider the following 119-residue polypeptide: Large ribosomal subunit protein bL20 (119 aa).

Belongs to the bacterial ribosomal protein bL20 family.

Its function is as follows. Binds directly to 23S ribosomal RNA and is necessary for the in vitro assembly process of the 50S ribosomal subunit. It is not involved in the protein synthesizing functions of that subunit. This is Large ribosomal subunit protein bL20 from Nitrosococcus oceani (strain ATCC 19707 / BCRC 17464 / JCM 30415 / NCIMB 11848 / C-107).